Consider the following 442-residue polypeptide: MENAKMNSLIAQYPLVKDLVALKETTWFNPSTTSLAEGLPYVGLTEQDVQDAHARLSRFAPYLAKAFAETAATGGIIESELVAIPAMQKRLEKEYQQPISGQLLLKKDSHLPISGSIKARGGIYEVLAHAEKLALEAGLLTLDDDYSKLLSPEFKQFFSQYSIAVGSTGNLGLSIGIMSARIGFKVTVHMSADARAWKKAKLRSHGVTVVEYEQDYGVAVEEGRKAAQSDPNCFFIDDENSRTLFLGYSVAGQRLKAQFAQQGRIVDADNPLFVYLPCGVGGGPGGVAFGLKLAFGDHVHCFFAEPTHSPCMLLGVHTGLHDQISVQDIGIDNLTAADGLAVGRASGFVGRAMERLLDGFYTLSDQTMYDMLGWLAQEEGIRLEPSALAGMAGPQRVCASVSYQQMHGFSAEQLRNATHLVWATGGGMVPEEEMNQYLAKGR.

Position 118 is an N6-(pyridoxal phosphate)lysine (Lys118).

Belongs to the serine/threonine dehydratase family. DsdA subfamily. As to quaternary structure, monomer. The cofactor is pyridoxal 5'-phosphate.

The catalysed reaction is D-serine = pyruvate + NH4(+). The chain is D-serine dehydratase from Shigella flexneri serotype 5b (strain 8401).